The following is a 151-amino-acid chain: Putative pre-16S rRNA nuclease (151 aa).

This sequence belongs to the YqgF nuclease family.

It is found in the cytoplasm. Its function is as follows. Could be a nuclease involved in processing of the 5'-end of pre-16S rRNA. In Prochlorococcus marinus (strain MIT 9515), this protein is Putative pre-16S rRNA nuclease.